Consider the following 247-residue polypeptide: Cross-pathway control protein 1 (247 aa).

Low complexity-rich tracts occupy residues 107–129 (DAETSAAPAPALAAPAPVPAAQA) and 145–169 (RPSQARKSSASSSPSGRHSSVSGVS). The segment at 107–213 (DAETSAAPAP…RARKAERMDE (107 aa)) is disordered. The 62-residue stretch at 186-247 (SDTVGMKRAK…LASSQGAAGQ (62 aa)) folds into the bZIP domain. The interval 192–210 (KRAKNTLAARKSRARKAER) is basic motif. The tract at residues 214–228 (LERQVRELEAEKEKL) is leucine-zipper.

The protein belongs to the bZIP family. GCN4 subfamily. In terms of assembly, binds DNA as a dimer.

It localises to the nucleus. Functionally, general amino acid control transactivator. Binds to the AP-1 consensus DNA binding element 5'-[AG]TGACTCAT-3'. The sequence is that of Cross-pathway control protein 1 (CPC-1) from Cryphonectria parasitica (Chestnut blight fungus).